Here is a 187-residue protein sequence, read N- to C-terminus: Interferon beta (187 aa).

A signal peptide spans 1–21 (MTNKCLLQIALLLCFSTTALS). A Phosphotyrosine modification is found at tyrosine 24. A disulfide bridge connects residues cysteine 52 and cysteine 162. A glycan (N-linked (GlcNAc...) asparagine) is linked at asparagine 101.

The protein belongs to the alpha/beta interferon family. In terms of assembly, monomer.

The protein localises to the secreted. Its function is as follows. Type I interferon cytokine that plays a key role in the innate immune response to infection, developing tumors and other inflammatory stimuli. Signals via binding to high-affinity (IFNAR2) and low-affinity (IFNAR1) heterodimeric receptor, activating the canonical Jak-STAT signaling pathway resulting in transcriptional activation or repression of interferon-regulated genes that encode the effectors of the interferon response, such as antiviral proteins, regulators of cell proliferation and differentiation, and immunoregulatory proteins. Signals mostly via binding to a IFNAR1-IFNAR2 heterodimeric receptor, but can also function with IFNAR1 alone and independently of Jak-STAT pathways. Elicits a wide variety of responses, including antiviral and antibacterial activities, and can regulate the development of B-cells, myelopoiesis and lipopolysaccharide (LPS)-inducible production of tumor necrosis factor. Plays a role in neuronal homeostasis by regulating dopamine turnover and protecting dopaminergic neurons: acts by promoting neuronal autophagy and alpha-synuclein clearance, thereby preventing dopaminergic neuron loss. IFNB1 is more potent than interferon-alpha (IFN-alpha) in inducing the apoptotic and antiproliferative pathways required for control of tumor cell growth. In Homo sapiens (Human), this protein is Interferon beta.